The following is a 70-amino-acid chain: U-scoloptoxin(20)-Sm1a (70 aa).

An N-terminal signal peptide occupies residues 1–24 (MKKRSQVFCIFIAMVLLILPLSMS).

It belongs to the scoloptoxin-20 family. Contains 3 disulfide bonds. In terms of tissue distribution, expressed by the venom gland.

Its subcellular location is the secreted. The polypeptide is U-scoloptoxin(20)-Sm1a (Scolopendra morsitans (Tanzanian blue ringleg centipede)).